We begin with the raw amino-acid sequence, 461 residues long: D-phenylhydantoinase (461 aa).

Residues His59, His61, and Lys151 each coordinate a divalent metal cation. An N6-carboxylysine modification is found at Lys151. Tyr156 provides a ligand contact to substrate. A divalent metal cation is bound by residues His182 and His239. Substrate is bound at residue Ser286. An a divalent metal cation-binding site is contributed by Asp313. Asn335 is a substrate binding site.

It belongs to the metallo-dependent hydrolases superfamily. Hydantoinase/dihydropyrimidinase family. Homotetramer. It depends on a divalent metal cation as a cofactor. Carboxylation allows a single lysine to coordinate two divalent metal cations.

It catalyses the reaction D-5-phenylhydantoin + H2O = N-carbamoyl-D-phenylglycine + H(+). Catalyzes the stereospecific hydrolysis of the cyclic amide bond of D-hydantoin derivatives with an aromatic side chains at the 5'-position. Has no activity on dihydropyrimidines. The physiological function is unknown. The polypeptide is D-phenylhydantoinase (Escherichia coli O127:H6 (strain E2348/69 / EPEC)).